The chain runs to 351 residues: Uroporphyrinogen decarboxylase (351 aa).

Substrate is bound by residues 26–30 (RQAGR), Asp-76, Tyr-153, Ser-208, and His-323.

This sequence belongs to the uroporphyrinogen decarboxylase family. In terms of assembly, homodimer.

The protein resides in the cytoplasm. It catalyses the reaction uroporphyrinogen III + 4 H(+) = coproporphyrinogen III + 4 CO2. The protein operates within porphyrin-containing compound metabolism; protoporphyrin-IX biosynthesis; coproporphyrinogen-III from 5-aminolevulinate: step 4/4. In terms of biological role, catalyzes the decarboxylation of four acetate groups of uroporphyrinogen-III to yield coproporphyrinogen-III. This Prochlorococcus marinus (strain MIT 9211) protein is Uroporphyrinogen decarboxylase.